We begin with the raw amino-acid sequence, 1082 residues long: Error-prone DNA polymerase (1082 aa).

It belongs to the DNA polymerase type-C family. DnaE2 subfamily.

It localises to the cytoplasm. It carries out the reaction DNA(n) + a 2'-deoxyribonucleoside 5'-triphosphate = DNA(n+1) + diphosphate. DNA polymerase involved in damage-induced mutagenesis and translesion synthesis (TLS). It is not the major replicative DNA polymerase. The polypeptide is Error-prone DNA polymerase (Xanthomonas campestris pv. campestris (strain B100)).